Reading from the N-terminus, the 300-residue chain is uncharacterized protein (300 aa).

An N-terminal signal peptide occupies residues 1–22; sequence MKSFVWTLLGALSLGSLTTAYG.

It localises to the endoplasmic reticulum. This is an uncharacterized protein from Schizosaccharomyces pombe (strain 972 / ATCC 24843) (Fission yeast).